We begin with the raw amino-acid sequence, 361 residues long: Glycerophosphodiester phosphodiesterase GDPD1, chloroplastic (361 aa).

Residues 1-53 (MSLKAIHVSEVPSLDHFPENPSLICSSRKANNKFVVVGHRGHGMNMSQSPDLR) constitute a chloroplast transit peptide. The region spanning 54-323 (FSALKENSIL…DHVEEITEAV (270 aa)) is the GP-PDE domain.

The protein belongs to the glycerophosphoryl diester phosphodiesterase family. Requires Mg(2+) as cofactor. As to expression, expressed in roots, shoots, rosette leaves, stems, flowers and siliques.

Its subcellular location is the plastid. It localises to the chloroplast. It catalyses the reaction a sn-glycero-3-phosphodiester + H2O = an alcohol + sn-glycerol 3-phosphate + H(+). Functionally, hydrolyzes glycerolphosphoglycerol, glycerophosphocholine and glycerophosphoethanolamine in vitro. May be involved in release of inorganic phosphate (Pi) from phospholipids during Pi starvation. This is Glycerophosphodiester phosphodiesterase GDPD1, chloroplastic from Arabidopsis thaliana (Mouse-ear cress).